Reading from the N-terminus, the 77-residue chain is Sec-independent protein translocase protein TatA (77 aa).

A helical transmembrane segment spans residues Met-1–Gly-21. The segment covering Gly-42–Glu-60 has biased composition (basic and acidic residues). The interval Gly-42–Val-77 is disordered.

This sequence belongs to the TatA/E family. In terms of assembly, the Tat system comprises two distinct complexes: a TatABC complex, containing multiple copies of TatA, TatB and TatC subunits, and a separate TatA complex, containing only TatA subunits. Substrates initially bind to the TatABC complex, which probably triggers association of the separate TatA complex to form the active translocon.

The protein resides in the cell inner membrane. Part of the twin-arginine translocation (Tat) system that transports large folded proteins containing a characteristic twin-arginine motif in their signal peptide across membranes. TatA could form the protein-conducting channel of the Tat system. This chain is Sec-independent protein translocase protein TatA, found in Bradyrhizobium diazoefficiens (strain JCM 10833 / BCRC 13528 / IAM 13628 / NBRC 14792 / USDA 110).